Reading from the N-terminus, the 609-residue chain is uncharacterized protein (609 aa).

This sequence belongs to the NodU/CmcH family.

This is an uncharacterized protein from Methanocaldococcus jannaschii (strain ATCC 43067 / DSM 2661 / JAL-1 / JCM 10045 / NBRC 100440) (Methanococcus jannaschii).